Here is a 198-residue protein sequence, read N- to C-terminus: Alkyl hydroperoxide reductase C (198 aa).

Residues 2-163 enclose the Thioredoxin domain; it reads TLVTQKAPNF…MIRMIDALNF (162 aa). Cys-50 functions as the Cysteine sulfenic acid (-SOH) intermediate in the catalytic mechanism.

This sequence belongs to the peroxiredoxin family. AhpC/Prx1 subfamily. In terms of assembly, homodimer; disulfide-linked, upon oxidation. 5 homodimers assemble to form a ring-like decamer.

The protein localises to the cytoplasm. It carries out the reaction a hydroperoxide + NADH + H(+) = an alcohol + NAD(+) + H2O. Functionally, thiol-specific peroxidase that catalyzes the reduction of hydrogen peroxide and organic hydroperoxides to water and alcohols, respectively. Plays a role in cell protection against oxidative stress by detoxifying peroxides. The chain is Alkyl hydroperoxide reductase C from Buchnera aphidicola subsp. Schizaphis graminum (strain Sg).